We begin with the raw amino-acid sequence, 218 residues long: Deoxyribose-phosphate aldolase (218 aa).

The active-site Proton donor/acceptor is Asp92. Lys156 acts as the Schiff-base intermediate with acetaldehyde in catalysis. Lys185 serves as the catalytic Proton donor/acceptor.

It belongs to the DeoC/FbaB aldolase family. DeoC type 1 subfamily.

It is found in the cytoplasm. It catalyses the reaction 2-deoxy-D-ribose 5-phosphate = D-glyceraldehyde 3-phosphate + acetaldehyde. Its pathway is carbohydrate degradation; 2-deoxy-D-ribose 1-phosphate degradation; D-glyceraldehyde 3-phosphate and acetaldehyde from 2-deoxy-alpha-D-ribose 1-phosphate: step 2/2. Catalyzes a reversible aldol reaction between acetaldehyde and D-glyceraldehyde 3-phosphate to generate 2-deoxy-D-ribose 5-phosphate. The sequence is that of Deoxyribose-phosphate aldolase from Desulfitobacterium hafniense (strain DSM 10664 / DCB-2).